The sequence spans 422 residues: Isocitrate dehydrogenase [NADP] (422 aa).

An NADP(+)-binding site is contributed by Thr-94. D-threo-isocitrate-binding residues include Ser-103, Asn-105, Arg-109, Arg-119, and Arg-143. Asp-310 provides a ligand contact to Mg(2+). Residues 344 to 350 (HGTAPKY), Asn-357, Tyr-396, and Arg-400 each bind NADP(+).

This sequence belongs to the isocitrate and isopropylmalate dehydrogenases family. In terms of assembly, homodimer. Mg(2+) is required as a cofactor. The cofactor is Mn(2+).

It carries out the reaction D-threo-isocitrate + NADP(+) = 2-oxoglutarate + CO2 + NADPH. In terms of biological role, catalyzes the oxidative decarboxylation of isocitrate to 2-oxoglutarate and carbon dioxide with the concomitant reduction of NADP(+). This Staphylococcus aureus (strain MSSA476) protein is Isocitrate dehydrogenase [NADP] (icd).